Consider the following 388-residue polypeptide: Succinate--CoA ligase [ADP-forming] subunit beta (388 aa).

The region spanning 9–244 (KDLLSSYDIA…PSQENVRDVL (236 aa)) is the ATP-grasp domain. Residues Lys-46, 53–55 (GRG), Val-102, and Glu-107 each bind ATP. Mg(2+) contacts are provided by Asn-199 and Asp-213. Substrate-binding positions include Asn-264 and 321–323 (GIM).

This sequence belongs to the succinate/malate CoA ligase beta subunit family. In terms of assembly, heterotetramer of two alpha and two beta subunits. The cofactor is Mg(2+).

It catalyses the reaction succinate + ATP + CoA = succinyl-CoA + ADP + phosphate. It carries out the reaction GTP + succinate + CoA = succinyl-CoA + GDP + phosphate. It functions in the pathway carbohydrate metabolism; tricarboxylic acid cycle; succinate from succinyl-CoA (ligase route): step 1/1. In terms of biological role, succinyl-CoA synthetase functions in the citric acid cycle (TCA), coupling the hydrolysis of succinyl-CoA to the synthesis of either ATP or GTP and thus represents the only step of substrate-level phosphorylation in the TCA. The beta subunit provides nucleotide specificity of the enzyme and binds the substrate succinate, while the binding sites for coenzyme A and phosphate are found in the alpha subunit. The protein is Succinate--CoA ligase [ADP-forming] subunit beta of Chlamydia felis (strain Fe/C-56) (Chlamydophila felis).